We begin with the raw amino-acid sequence, 91 residues long: UPF0367 protein cce_2199 (91 aa).

It belongs to the UPF0367 family.

This chain is UPF0367 protein cce_2199, found in Crocosphaera subtropica (strain ATCC 51142 / BH68) (Cyanothece sp. (strain ATCC 51142)).